The primary structure comprises 900 residues: DNA mismatch repair protein MutS (900 aa).

637–644 serves as a coordination point for ATP; the sequence is GPNMAGKS.

This sequence belongs to the DNA mismatch repair MutS family.

Its function is as follows. This protein is involved in the repair of mismatches in DNA. It is possible that it carries out the mismatch recognition step. This protein has a weak ATPase activity. The protein is DNA mismatch repair protein MutS of Methanosarcina mazei (strain ATCC BAA-159 / DSM 3647 / Goe1 / Go1 / JCM 11833 / OCM 88) (Methanosarcina frisia).